Reading from the N-terminus, the 369-residue chain is uncharacterized protein (369 aa).

The span at 110 to 121 (ARPTDAFGAPIA) shows a compositional bias: low complexity. A disordered region spans residues 110–172 (ARPTDAFGAP…PPPPASGGGA (63 aa)). The segment covering 122-136 (PSEPTPASAPSPPKA) has biased composition (pro residues).

This is an uncharacterized protein from Lymantria dispar multicapsid nuclear polyhedrosis virus (LdMNPV).